The chain runs to 206 residues: Histidine biosynthesis bifunctional protein HisIE (206 aa).

The segment at 1-117 (MGSNEVATGD…SCFPSAPGQF (117 aa)) is phosphoribosyl-AMP cyclohydrolase. Residues 118–206 (LGSLDALVAE…AAALLESRHQ (89 aa)) are phosphoribosyl-ATP pyrophosphohydrolase.

It in the N-terminal section; belongs to the PRA-CH family. The protein in the C-terminal section; belongs to the PRA-PH family.

It is found in the cytoplasm. The enzyme catalyses 1-(5-phospho-beta-D-ribosyl)-ATP + H2O = 1-(5-phospho-beta-D-ribosyl)-5'-AMP + diphosphate + H(+). It carries out the reaction 1-(5-phospho-beta-D-ribosyl)-5'-AMP + H2O = 1-(5-phospho-beta-D-ribosyl)-5-[(5-phospho-beta-D-ribosylamino)methylideneamino]imidazole-4-carboxamide. It participates in amino-acid biosynthesis; L-histidine biosynthesis; L-histidine from 5-phospho-alpha-D-ribose 1-diphosphate: step 2/9. Its pathway is amino-acid biosynthesis; L-histidine biosynthesis; L-histidine from 5-phospho-alpha-D-ribose 1-diphosphate: step 3/9. This Xanthomonas axonopodis pv. citri (strain 306) protein is Histidine biosynthesis bifunctional protein HisIE.